We begin with the raw amino-acid sequence, 499 residues long: NADH-quinone oxidoreductase subunit 14 (499 aa).

14 helical membrane passes run 9–29, 37–57, 76–96, 104–124, 126–146, 161–181, 196–216, 235–255, 269–289, 301–321, 324–344, 369–389, 402–422, and 446–466; these read ILPE…GAYL, TLLW…GLGN, FAKV…ADYM, FEFP…VSAG, LLTL…VAAM, FVLG…VYGF, AGHL…GLSF, PTPV…ALIA, WSQI…IAGI, SSIA…AIGV, MLLY…FILS, ALAM…LGFF, GMGW…FYYL, and YLAL…MFGV.

Belongs to the complex I subunit 2 family. In terms of assembly, NDH-1 is composed of at least 14 different subunits, Nqo1 to Nqo14. The complex has a L-shaped structure, with the hydrophobic arm (subunits Nqo7, Nqo8, Nqo10 to Nqo14) embedded in the inner membrane and the hydrophilic peripheral arm (subunits Nqo1 to Nqo6, Nqo9) protruding into the bacterial cytoplasm. The hydrophilic domain contains all the redox centers.

The protein localises to the cell inner membrane. The catalysed reaction is a quinone + NADH + 5 H(+)(in) = a quinol + NAD(+) + 4 H(+)(out). Functionally, NDH-1 shuttles electrons from NADH, via FMN and iron-sulfur (Fe-S) centers, to quinones in the respiratory chain. The immediate electron acceptor for the enzyme in this species is believed to be ubiquinone. Couples the redox reaction to proton translocation (for every two electrons transferred, four hydrogen ions are translocated across the cytoplasmic membrane), and thus conserves the redox energy in a proton gradient. In Paracoccus denitrificans, this protein is NADH-quinone oxidoreductase subunit 14.